The primary structure comprises 309 residues: Coproporphyrin III ferrochelatase (309 aa).

Fe-coproporphyrin III-binding positions include Tyr-12, Arg-29, 45-46, Ser-53, and Tyr-124; that span reads RY. Residues His-182 and Glu-263 each coordinate Fe(2+).

The protein belongs to the ferrochelatase family.

The protein localises to the cytoplasm. It carries out the reaction Fe-coproporphyrin III + 2 H(+) = coproporphyrin III + Fe(2+). Its pathway is porphyrin-containing compound metabolism; protoheme biosynthesis. Functionally, involved in coproporphyrin-dependent heme b biosynthesis. Catalyzes the insertion of ferrous iron into coproporphyrin III to form Fe-coproporphyrin III. The protein is Coproporphyrin III ferrochelatase of Listeria innocua serovar 6a (strain ATCC BAA-680 / CLIP 11262).